We begin with the raw amino-acid sequence, 303 residues long: Elongation factor Ts (303 aa).

Residues 80-83 are involved in Mg(2+) ion dislocation from EF-Tu; the sequence is TDFV.

This sequence belongs to the EF-Ts family.

The protein localises to the cytoplasm. In terms of biological role, associates with the EF-Tu.GDP complex and induces the exchange of GDP to GTP. It remains bound to the aminoacyl-tRNA.EF-Tu.GTP complex up to the GTP hydrolysis stage on the ribosome. The polypeptide is Elongation factor Ts (Clostridium botulinum (strain Eklund 17B / Type B)).